Here is a 459-residue protein sequence, read N- to C-terminus: F-box protein At1g47340 (459 aa).

Residues 31–76 form the F-box domain; that stretch reads FMVSVSLPKELILEILKRLPAKSVKRFHCVSKQWASMLSCPHFREL. Residues 434–459 form a disordered region; it reads AKIEWEEEEEEDEDEDQEKEEEDQWS. The segment covering 438-459 has biased composition (acidic residues); that stretch reads WEEEEEEDEDEDQEKEEEDQWS.

This is F-box protein At1g47340 from Arabidopsis thaliana (Mouse-ear cress).